A 296-amino-acid polypeptide reads, in one-letter code: Small ribosomal subunit protein uS2 (296 aa).

Positions 252-296 (TSSKTVSKLKQSKKLSKTQNIDEETNTEFDQALGGACENNNSDNT) are disordered.

Belongs to the universal ribosomal protein uS2 family.

In Rickettsia prowazekii (strain Madrid E), this protein is Small ribosomal subunit protein uS2 (rpsB).